A 625-amino-acid polypeptide reads, in one-letter code: Protein arginine N-methyltransferase skb1 (625 aa).

Positions 280–588 (LQVPLQPLSY…WRLTDGMRVW (309 aa)) constitute an SAM-dependent MTase PRMT-type domain. S-adenosyl-L-methionine contacts are provided by residues tyrosine 296, 305 to 306 (KY), glutamate 359, and 386 to 387 (DM). Catalysis depends on proton donor/acceptor residues glutamate 402 and glutamate 411.

This sequence belongs to the class I-like SAM-binding methyltransferase superfamily. Protein arginine N-methyltransferase family. As to quaternary structure, interacts with the N-terminal regulatory domain of shk1. Shk1, cdc42 and skb1 are able to form a ternary complex in vivo. Interacts with orb6. Interacts with Cdr1 and the Cdr1 inhibitory target Wee1.

Its subcellular location is the nucleus. It localises to the cell tip. The protein resides in the cell septum. The protein localises to the cytoplasm. It is found in the cell cortex. Its function is as follows. S-adenosyl-L-methionine-dependent protein-arginine N-methyltransferase that can catalyze both the mono- and symmetric (type II) dimethylation of the guanidino nitrogens of arginine residues in target proteins. Delays mitotic entry by inhibiting the Cdr1-Wee1 signaling pathway. Cortical nodes sequester Skb1 from its regulatory targets Cdr1 and Wee1. Positively modulates the shk1 kinase function. May be a mediator of hyperosmotic stress response. Involved in the control of cell polarity by regulating the subcellular localization of Orb6 kinase. This is Protein arginine N-methyltransferase skb1 from Schizosaccharomyces pombe (strain 972 / ATCC 24843) (Fission yeast).